A 146-amino-acid polypeptide reads, in one-letter code: Neuropeptide Y receptor type 2 (146 aa).

Residues Lys-1 to His-8 lie on the Extracellular side of the membrane. Residues Cys-7 and Cys-87 are joined by a disulfide bond. Residues Leu-9–Ala-29 traverse the membrane as a helical segment. Residues Leu-30–Ser-49 lie on the Cytoplasmic side of the membrane. The helical transmembrane segment at Phe-50–Phe-70 threads the bilayer. The Extracellular portion of the chain corresponds to Arg-71–Gly-100. The chain crosses the membrane as a helical span at residues Thr-101–Phe-121. Residues Ser-122–Arg-146 are Cytoplasmic-facing.

Belongs to the G-protein coupled receptor 1 family.

It is found in the cell membrane. In terms of biological role, receptor for neuropeptide Y and peptide YY. This Ovis aries (Sheep) protein is Neuropeptide Y receptor type 2 (NPY2R).